Reading from the N-terminus, the 336-residue chain is Phosphate acyltransferase (336 aa).

This sequence belongs to the PlsX family. Homodimer. Probably interacts with PlsY.

The protein resides in the cytoplasm. The enzyme catalyses a fatty acyl-[ACP] + phosphate = an acyl phosphate + holo-[ACP]. Its pathway is lipid metabolism; phospholipid metabolism. In terms of biological role, catalyzes the reversible formation of acyl-phosphate (acyl-PO(4)) from acyl-[acyl-carrier-protein] (acyl-ACP). This enzyme utilizes acyl-ACP as fatty acyl donor, but not acyl-CoA. This chain is Phosphate acyltransferase, found in Dictyoglomus turgidum (strain DSM 6724 / Z-1310).